A 76-amino-acid chain; its full sequence is ATP synthase peripheral stalk subunit F6, mitochondrial (76 aa).

3 positions are modified to N6-acetyllysine: lysine 9, lysine 14, and lysine 47. 2 positions are modified to N6-acetyllysine; alternate: lysine 52 and lysine 67. Lysine 52 and lysine 67 each carry N6-succinyllysine; alternate. Lysine 73 carries the N6-acetyllysine modification. Serine 76 is modified (phosphoserine).

It belongs to the eukaryotic ATPase subunit F6 family. In terms of assembly, component of the ATP synthase complex composed at least of ATP5F1A/subunit alpha, ATP5F1B/subunit beta, ATP5MC1/subunit c (homooctomer), MT-ATP6/subunit a, MT-ATP8/subunit 8, ATP5ME/subunit e, ATP5MF/subunit f, ATP5MG/subunit g, ATP5MK/subunit k, ATP5MJ/subunit j, ATP5F1C/subunit gamma, ATP5F1D/subunit delta, ATP5F1E/subunit epsilon, ATP5PF/subunit F6, ATP5PB/subunit b, ATP5PD/subunit d, ATP5PO/subunit OSCP. ATP synthase complex consists of a soluble F(1) head domain (subunits alpha(3) and beta(3)) - the catalytic core - and a membrane F(0) domain - the membrane proton channel (subunits c, a, 8, e, f, g, k and j). These two domains are linked by a central stalk (subunits gamma, delta, and epsilon) rotating inside the F1 region and a stationary peripheral stalk (subunits F6, b, d, and OSCP).

It is found in the mitochondrion. It localises to the mitochondrion inner membrane. Its function is as follows. Subunit F6, of the mitochondrial membrane ATP synthase complex (F(1)F(0) ATP synthase or Complex V) that produces ATP from ADP in the presence of a proton gradient across the membrane which is generated by electron transport complexes of the respiratory chain. ATP synthase complex consist of a soluble F(1) head domain - the catalytic core - and a membrane F(1) domain - the membrane proton channel. These two domains are linked by a central stalk rotating inside the F(1) region and a stationary peripheral stalk. During catalysis, ATP synthesis in the catalytic domain of F(1) is coupled via a rotary mechanism of the central stalk subunits to proton translocation. In vivo, can only synthesize ATP although its ATP hydrolase activity can be activated artificially in vitro. Part of the complex F(0) domain. Part of the complex F(0) domain and the peripheric stalk, which acts as a stator to hold the catalytic alpha(3)beta(3) subcomplex and subunit a/ATP6 static relative to the rotary elements. This Sus scrofa (Pig) protein is ATP synthase peripheral stalk subunit F6, mitochondrial.